The following is a 446-amino-acid chain: Adenylosuccinate synthetase (446 aa).

GTP is bound by residues 20–26 (GDEGKGK) and 48–50 (GHT). D21 functions as the Proton acceptor in the catalytic mechanism. Residues D21 and G48 each coordinate Mg(2+). IMP is bound by residues 21-24 (DEGK), 46-49 (NAGH), T137, R151, Q232, T247, and R319. The Proton donor role is filled by H49. Residue 315 to 321 (SVTGRPR) coordinates substrate. GTP-binding positions include R321, 347–349 (KLD), and 429–431 (STG).

This sequence belongs to the adenylosuccinate synthetase family. Homodimer. The cofactor is Mg(2+).

It is found in the cytoplasm. The catalysed reaction is IMP + L-aspartate + GTP = N(6)-(1,2-dicarboxyethyl)-AMP + GDP + phosphate + 2 H(+). It participates in purine metabolism; AMP biosynthesis via de novo pathway; AMP from IMP: step 1/2. Functionally, plays an important role in the de novo pathway of purine nucleotide biosynthesis. Catalyzes the first committed step in the biosynthesis of AMP from IMP. In Ralstonia nicotianae (strain ATCC BAA-1114 / GMI1000) (Ralstonia solanacearum), this protein is Adenylosuccinate synthetase.